The sequence spans 220 residues: Deoxyribose-phosphate aldolase (220 aa).

Aspartate 89 acts as the Proton donor/acceptor in catalysis. Lysine 151 serves as the catalytic Schiff-base intermediate with acetaldehyde. Lysine 180 acts as the Proton donor/acceptor in catalysis.

It belongs to the DeoC/FbaB aldolase family. DeoC type 1 subfamily.

Its subcellular location is the cytoplasm. The catalysed reaction is 2-deoxy-D-ribose 5-phosphate = D-glyceraldehyde 3-phosphate + acetaldehyde. It participates in carbohydrate degradation; 2-deoxy-D-ribose 1-phosphate degradation; D-glyceraldehyde 3-phosphate and acetaldehyde from 2-deoxy-alpha-D-ribose 1-phosphate: step 2/2. In terms of biological role, catalyzes a reversible aldol reaction between acetaldehyde and D-glyceraldehyde 3-phosphate to generate 2-deoxy-D-ribose 5-phosphate. The sequence is that of Deoxyribose-phosphate aldolase from Streptococcus sanguinis (strain SK36).